The chain runs to 218 residues: Recombination protein RecR (218 aa).

The segment at 56–71 (CRICCNISREEVCRIC) adopts a C4-type zinc-finger fold. The region spanning 79 to 195 (GTICVVEEPK…VVSRLASGMP (117 aa)) is the Toprim domain.

This sequence belongs to the RecR family.

May play a role in DNA repair. It seems to be involved in an RecBC-independent recombinational process of DNA repair. It may act with RecF and RecO. This chain is Recombination protein RecR, found in Corynebacterium glutamicum (strain R).